The primary structure comprises 542 residues: Chaperonin GroEL 3 (542 aa).

Residues T29 to P32, D86 to T90, G413, N477 to A479, and D493 contribute to the ATP site.

This sequence belongs to the chaperonin (HSP60) family. As to quaternary structure, forms a cylinder of 14 subunits composed of two heptameric rings stacked back-to-back. Interacts with the co-chaperonin GroES.

It localises to the cytoplasm. The catalysed reaction is ATP + H2O + a folded polypeptide = ADP + phosphate + an unfolded polypeptide.. In terms of biological role, together with its co-chaperonin GroES, plays an essential role in assisting protein folding. The GroEL-GroES system forms a nano-cage that allows encapsulation of the non-native substrate proteins and provides a physical environment optimized to promote and accelerate protein folding. The protein is Chaperonin GroEL 3 of Frankia alni (strain DSM 45986 / CECT 9034 / ACN14a).